The sequence spans 87 residues: Phospholemman (87 aa).

The N-terminal stretch at 1-20 (MASLSHILVLWVGILTVVNA) is a signal peptide. Topologically, residues 21–35 (EAPQEHDPFTYDYQS) are extracellular. The helical transmembrane segment at 36–56 (LRIGGLIIAGILFILGILIVL) threads the bilayer. Residues 57–87 (SRRCRCKFNQQQSLGKMRSPHLAAQFSSESC) are Cytoplasmic-facing. Cys60 carries the S-palmitoyl cysteine lipid modification. Cys62 carries the post-translational modification S-glutathionyl cysteine; alternate. Residue Cys62 is the site of S-palmitoyl cysteine; alternate attachment. Ser75 bears the Phosphoserine; by PKA and PKC mark. Phosphoserine; by PKA is present on Ser83.

The protein belongs to the FXYD family. In terms of assembly, homotetramer. Monomer. Regulatory subunit of the sodium/potassium-transporting ATPase (NKA) which is composed of a catalytic alpha subunit, a non-catalytic beta subunit and an additional regulatory subunit. The monomeric form associates with NKA while the oligomeric form does not. Interacts with the catalytic alpha-1 subunit ATP1A1. Also interacts with the catalytic alpha-2 and alpha-3 subunits ATP1A2 and ATP1A3. Very little interaction with ATP1A1, ATP1A2 or ATP1A3 when phosphorylated at Ser-83. Interacts with the non-catalytic beta-1 subunit ATP1B1. Oxidative stress decreases interaction with ATP1A1 but increases interaction with ATP1B1. In terms of processing, major plasma membrane substrate for cAMP-dependent protein kinase (PKA) and protein kinase C (PKC) in several different tissues. Phosphorylated in response to insulin and adrenergic stimulation. Phosphorylation at Ser-83 stimulates sodium/potassium-transporting ATPase activity while the unphosphorylated form inhibits sodium/potassium-transporting ATPase activity. Phosphorylation increases tetramerization, decreases binding to ATP1A1 and reduces inhibition of ATP1A1 activity. Phosphorylation at Ser-75 leads to greatly reduced interaction with ATP1A1, ATP1A2 and ATP1A3. May be phosphorylated by DMPK. Palmitoylation increases half-life and stability and is enhanced upon phosphorylation at Ser-83 by PKA.

It localises to the cell membrane. Its subcellular location is the sarcolemma. The protein localises to the apical cell membrane. It is found in the membrane. The protein resides in the caveola. It localises to the T-tubule. Functionally, associates with and regulates the activity of the sodium/potassium-transporting ATPase (NKA) which transports Na(+) out of the cell and K(+) into the cell. Inhibits NKA activity in its unphosphorylated state and stimulates activity when phosphorylated. Reduces glutathionylation of the NKA beta-1 subunit ATP1B1, thus reversing glutathionylation-mediated inhibition of ATP1B1. Contributes to female sexual development by maintaining the excitability of neurons which secrete gonadotropin-releasing hormone. The protein is Phospholemman of Sus scrofa (Pig).